We begin with the raw amino-acid sequence, 505 residues long: Lysine--tRNA ligase (505 aa).

Positions 415 and 422 each coordinate Mg(2+).

It belongs to the class-II aminoacyl-tRNA synthetase family. As to quaternary structure, homodimer. Requires Mg(2+) as cofactor.

It localises to the cytoplasm. It catalyses the reaction tRNA(Lys) + L-lysine + ATP = L-lysyl-tRNA(Lys) + AMP + diphosphate. The polypeptide is Lysine--tRNA ligase (Xanthomonas oryzae pv. oryzae (strain MAFF 311018)).